The following is a 307-amino-acid chain: Ribosomal protein L11 methyltransferase (307 aa).

Positions 156, 177, 199, and 243 each coordinate S-adenosyl-L-methionine.

The protein belongs to the methyltransferase superfamily. PrmA family.

It is found in the cytoplasm. The catalysed reaction is L-lysyl-[protein] + 3 S-adenosyl-L-methionine = N(6),N(6),N(6)-trimethyl-L-lysyl-[protein] + 3 S-adenosyl-L-homocysteine + 3 H(+). Methylates ribosomal protein L11. This is Ribosomal protein L11 methyltransferase from Syntrophomonas wolfei subsp. wolfei (strain DSM 2245B / Goettingen).